Reading from the N-terminus, the 276-residue chain is MEQFKTYALMTGLTLLFIWFGGMIAGQTGMVIAFLVAAGMNFYAYYYSDQQVLSHYHAEPVDRAHASGLYQIVEKLTRRAGLPMPALYIIPEQQPNAFATGRNYEHAAVAVTEGLLDLMTDEEIEAVIAHELSHIKHYDMLIGTVAATIAGAIAMLANFGMFFGSGDRDRPNIFVMLALMFIMPMAASIIQMTVSRNREFMADEGSARMTGHPEWLQSALTKLDNYARSITLPEADPQTAHMFIINPFSGKDVSLKQLFSTHPSTEARIERLEALK.

Residues 16–36 (LFIWFGGMIAGQTGMVIAFLV) form a helical membrane-spanning segment. Histidine 130 contributes to the Zn(2+) binding site. Residue glutamate 131 is part of the active site. Histidine 134 contacts Zn(2+). Transmembrane regions (helical) follow at residues 142-162 (IGTV…FGMF) and 173-193 (IFVM…IQMT). Residue glutamate 199 coordinates Zn(2+).

It belongs to the peptidase M48B family. It depends on Zn(2+) as a cofactor.

The protein localises to the cell inner membrane. This chain is Protease HtpX homolog, found in Sulfurovum sp. (strain NBC37-1).